The following is a 332-amino-acid chain: Beta-ketoacyl-[acyl-carrier-protein] synthase III (332 aa).

Residues C116 and H257 contribute to the active site. Residues 258 to 262 (QANQR) are ACP-binding. The active site involves N287.

The protein belongs to the thiolase-like superfamily. FabH family. As to quaternary structure, homodimer.

It is found in the cytoplasm. The enzyme catalyses malonyl-[ACP] + acetyl-CoA + H(+) = 3-oxobutanoyl-[ACP] + CO2 + CoA. The protein operates within lipid metabolism; fatty acid biosynthesis. Catalyzes the condensation reaction of fatty acid synthesis by the addition to an acyl acceptor of two carbons from malonyl-ACP. Catalyzes the first condensation reaction which initiates fatty acid synthesis and may therefore play a role in governing the total rate of fatty acid production. Possesses both acetoacetyl-ACP synthase and acetyl transacylase activities. Its substrate specificity determines the biosynthesis of branched-chain and/or straight-chain of fatty acids. This is Beta-ketoacyl-[acyl-carrier-protein] synthase III from Acaryochloris marina (strain MBIC 11017).